Reading from the N-terminus, the 190-residue chain is Copper-binding lipoprotein NosL (190 aa).

The signal sequence occupies residues 1–23 (MNALHRIGAGTLLAVLLAFGLTG). Cys24 is lipidated: N-palmitoyl cysteine. Cys24 is lipidated: S-diacylglycerol cysteine. The disordered stretch occupies residues 170–190 (MQHGGMHDHAPNGAHNAHAGH). The span at 180–190 (PNGAHNAHAGH) shows a compositional bias: low complexity.

Belongs to the NosL family. As to quaternary structure, monomer.

The protein resides in the cell membrane. In terms of biological role, may act as a metallochaperone involved in nitrous oxide reductase assembly. Specifically binds Cu(+). This is Copper-binding lipoprotein NosL from Stutzerimonas stutzeri (Pseudomonas stutzeri).